We begin with the raw amino-acid sequence, 126 residues long: Holo-[acyl-carrier-protein] synthase (126 aa).

2 residues coordinate Mg(2+): Asp9 and Glu57.

The protein belongs to the P-Pant transferase superfamily. AcpS family. Requires Mg(2+) as cofactor.

The protein resides in the cytoplasm. The enzyme catalyses apo-[ACP] + CoA = holo-[ACP] + adenosine 3',5'-bisphosphate + H(+). Transfers the 4'-phosphopantetheine moiety from coenzyme A to a Ser of acyl-carrier-protein. The protein is Holo-[acyl-carrier-protein] synthase of Alteromonas mediterranea (strain DSM 17117 / CIP 110805 / LMG 28347 / Deep ecotype).